The primary structure comprises 192 residues: MITISENAQQHFIKLLSQQAEGTHIRVFVVNPGTAKAECGVSYCPPDAVEADDIQLPFEGFSAMVDADSKGFLEDAEIDFTTDQMGSQLTLKAPNAKLRKVADDAPLFERVHYFLQAEVNPQLAGHGGECTLVEITDDGYAVLQFGGGCNGCAQIDVTVKDGIEKQLIELMAGEIKGVKDATEHERGDHSYY.

2 residues coordinate [4Fe-4S] cluster: Cys149 and Cys152.

Belongs to the NfuA family. As to quaternary structure, homodimer. It depends on [4Fe-4S] cluster as a cofactor.

Its function is as follows. Involved in iron-sulfur cluster biogenesis. Binds a 4Fe-4S cluster, can transfer this cluster to apoproteins, and thereby intervenes in the maturation of Fe/S proteins. Could also act as a scaffold/chaperone for damaged Fe/S proteins. The chain is Fe/S biogenesis protein NfuA from Colwellia psychrerythraea (strain 34H / ATCC BAA-681) (Vibrio psychroerythus).